A 403-amino-acid polypeptide reads, in one-letter code: D-alanyl-D-alanine carboxypeptidase DacA (403 aa).

Positions 1–29 are cleaved as a signal peptide; that stretch reads MNTIFSARIMKRLALTTALCTAFISAAHA. The active-site Acyl-ester intermediate is Ser-73. Lys-76 (proton acceptor) is an active-site residue. The active site involves Ser-139. Lys-242 contacts substrate.

This sequence belongs to the peptidase S11 family.

It is found in the cell inner membrane. It catalyses the reaction Preferential cleavage: (Ac)2-L-Lys-D-Ala-|-D-Ala. Also transpeptidation of peptidyl-alanyl moieties that are N-acyl substituents of D-alanine.. Its pathway is cell wall biogenesis; peptidoglycan biosynthesis. In terms of biological role, removes C-terminal D-alanyl residues from sugar-peptide cell wall precursors. This is D-alanyl-D-alanine carboxypeptidase DacA (dacA) from Escherichia coli O157:H7.